Consider the following 134-residue polypeptide: Retinol-binding protein 2 (134 aa).

All-trans-retinol-binding residues include K41 and Q109.

The protein belongs to the calycin superfamily. Fatty-acid binding protein (FABP) family.

The protein resides in the cytoplasm. Its function is as follows. Intracellular transport of retinol. The sequence is that of Retinol-binding protein 2 (RBP2) from Sus scrofa (Pig).